The following is a 219-amino-acid chain: Octanoyltransferase (219 aa).

The BPL/LPL catalytic domain occupies 32-207 (ASSPDQLWIV…TFSHNLGYQN (176 aa)). Substrate contacts are provided by residues 71–78 (RGGQVTYH), 138–140 (SLG), and 151–153 (GLA). Cys169 acts as the Acyl-thioester intermediate in catalysis.

It belongs to the LipB family.

It localises to the cytoplasm. The enzyme catalyses octanoyl-[ACP] + L-lysyl-[protein] = N(6)-octanoyl-L-lysyl-[protein] + holo-[ACP] + H(+). The protein operates within protein modification; protein lipoylation via endogenous pathway; protein N(6)-(lipoyl)lysine from octanoyl-[acyl-carrier-protein]: step 1/2. Catalyzes the transfer of endogenously produced octanoic acid from octanoyl-acyl-carrier-protein onto the lipoyl domains of lipoate-dependent enzymes. Lipoyl-ACP can also act as a substrate although octanoyl-ACP is likely to be the physiological substrate. The sequence is that of Octanoyltransferase from Shewanella sediminis (strain HAW-EB3).